Reading from the N-terminus, the 291-residue chain is MSYKLALSGVACLTKSTILRKLEARKYFRVHMLDYKELYDRFDFDLRVGALLHTAYRCTHDRSATVGEYDRVHIFDRLPTESVVYGAIAQGLSEEDGRRAYEKCLEMNLHEDWRSVVLMAAPDTESLVTEKMKRRNNGIDCMNEQYVLAQNKHFKIWSEVMNAPAVEIDWRLDMEAQQTRVINLLHDLVYRWETRENDVLVYYHLLPILRRRYVVCDKGDCPARLREAIDQGSTVVLRWPAGADLEAAKREAVEACKVPLVAVIARDSEWLRSADFERYVVERVLNRAFDC.

This is an uncharacterized protein from Lymantria dispar multicapsid nuclear polyhedrosis virus (LdMNPV).